The sequence spans 163 residues: Photosystem II extrinsic protein V (163 aa).

Residues 1–26 form the signal peptide; sequence MFKKSYQFFALVLFSIFNVLVTSASA. The heme c site is built by Cys-63, Cys-66, His-67, and His-118.

It belongs to the cytochrome c family. PsbV subfamily. As to quaternary structure, PSII is composed of 1 copy each of membrane proteins PsbA, PsbB, PsbC, PsbD, PsbE, PsbF, PsbH, PsbI, PsbJ, PsbK, PsbL, PsbM, PsbT, PsbY, PsbZ, Psb30/Ycf12, at least 3 peripheral proteins of the oxygen-evolving complex and a large number of cofactors. It forms dimeric complexes. The cofactor is heme c.

It localises to the plastid. Its subcellular location is the chloroplast thylakoid membrane. One of the extrinsic, lumenal subunits of photosystem II (PSII). PSII is a light-driven water plastoquinone oxidoreductase, using light energy to abstract electrons from H(2)O, generating a proton gradient subsequently used for ATP formation. The extrinsic proteins stabilize the structure of photosystem II oxygen-evolving complex (OEC), the ion environment of oxygen evolution and protect the OEC against heat-induced inactivation. The sequence is that of Photosystem II extrinsic protein V from Trieres chinensis (Marine centric diatom).